The primary structure comprises 516 residues: 2,3-bisphosphoglycerate-independent phosphoglycerate mutase (516 aa).

Positions 15 and 65 each coordinate Mn(2+). The Phosphoserine intermediate role is filled by Ser65. Residues His126, 156–157 (RD), Arg188, Arg194, 263–266 (RADR), and Lys336 each bind substrate. Residues Asp403, His407, Asp444, His445, and His463 each coordinate Mn(2+).

It belongs to the BPG-independent phosphoglycerate mutase family. Monomer. The cofactor is Mn(2+).

The enzyme catalyses (2R)-2-phosphoglycerate = (2R)-3-phosphoglycerate. Its pathway is carbohydrate degradation; glycolysis; pyruvate from D-glyceraldehyde 3-phosphate: step 3/5. Functionally, catalyzes the interconversion of 2-phosphoglycerate and 3-phosphoglycerate. The sequence is that of 2,3-bisphosphoglycerate-independent phosphoglycerate mutase from Francisella tularensis subsp. holarctica (strain OSU18).